Consider the following 336-residue polypeptide: Dihydroorotate dehydrogenase (quinone) (336 aa).

FMN is bound by residues 62–66 (AGLDK) and T86. K66 contacts substrate. A substrate-binding site is contributed by 111–115 (NRMGF). FMN is bound by residues N139 and N172. N172 contacts substrate. S175 serves as the catalytic Nucleophile. A substrate-binding site is contributed by N177. 2 residues coordinate FMN: K217 and T245. Substrate is bound at residue 246–247 (NT). FMN contacts are provided by residues G268, G297, and 318–319 (YS).

It belongs to the dihydroorotate dehydrogenase family. Type 2 subfamily. In terms of assembly, monomer. It depends on FMN as a cofactor.

Its subcellular location is the cell membrane. It carries out the reaction (S)-dihydroorotate + a quinone = orotate + a quinol. It functions in the pathway pyrimidine metabolism; UMP biosynthesis via de novo pathway; orotate from (S)-dihydroorotate (quinone route): step 1/1. Catalyzes the conversion of dihydroorotate to orotate with quinone as electron acceptor. This is Dihydroorotate dehydrogenase (quinone) from Aeromonas hydrophila subsp. hydrophila (strain ATCC 7966 / DSM 30187 / BCRC 13018 / CCUG 14551 / JCM 1027 / KCTC 2358 / NCIMB 9240 / NCTC 8049).